The chain runs to 287 residues: Ketoacyl reductase HetN (287 aa).

Leu-11–Cys-35 provides a ligand contact to NAD(+). Ser-142 is a binding site for substrate. The active-site Proton acceptor is the Tyr-155.

It belongs to the short-chain dehydrogenases/reductases (SDR) family.

Functionally, may be involved in repressing heterocyst differentiation and may be essential for preventing all vegetative cells from differentiating. The polypeptide is Ketoacyl reductase HetN (hetN) (Nostoc sp. (strain PCC 7120 / SAG 25.82 / UTEX 2576)).